The following is a 1200-amino-acid chain: Zinc finger protein 804A (1200 aa).

The C2H2-type zinc finger occupies 57–81 (FYCELCDKQYYKHQEFDNHINSYDH). Disordered stretches follow at residues 252-280 (STSH…PEAM), 343-367 (DGPV…RTSA), 582-687 (HWFH…NCGG), 727-777 (EDDG…SDES), 799-828 (QPKK…NYPM), and 874-949 (PYNP…TNPE). A compositionally biased stretch (basic residues) spans 585–603 (HKSRRKKKRRKLCRYHPGK). Residues 604–666 (SSKEPEGSGK…ASTHLGEKET (63 aa)) are compositionally biased toward basic and acidic residues. Composition is skewed to polar residues over residues 667-687 (MNTT…NCGG) and 732-756 (LASQ…SLTN). Positions 800 to 811 (PKKKRRRKRSRL) are enriched in basic residues. Positions 891–944 (TETTPCDSSQTSNDLATPVNVTRDPSNSTTDNTLLEHNQRSQTTNSNEKQTPFK) are enriched in polar residues.

The chain is Zinc finger protein 804A (Znf804a) from Mus musculus (Mouse).